The sequence spans 425 residues: tRNA(Ile)-lysidine synthase (425 aa).

27–32 (SGGLDS) serves as a coordination point for ATP.

This sequence belongs to the tRNA(Ile)-lysidine synthase family.

It localises to the cytoplasm. It catalyses the reaction cytidine(34) in tRNA(Ile2) + L-lysine + ATP = lysidine(34) in tRNA(Ile2) + AMP + diphosphate + H(+). Ligates lysine onto the cytidine present at position 34 of the AUA codon-specific tRNA(Ile) that contains the anticodon CAU, in an ATP-dependent manner. Cytidine is converted to lysidine, thus changing the amino acid specificity of the tRNA from methionine to isoleucine. The polypeptide is tRNA(Ile)-lysidine synthase (Streptococcus pneumoniae (strain Taiwan19F-14)).